Consider the following 288-residue polypeptide: MDVTAKYELIGLMAYPIRHSLSPEMQNKALEKAGLPFTYMAFEVDNDSFPGAIEGLKALKMRGTGVSMPNKQLACEYVDELTPAAKLVGAINTIVNDDGYLRGYNTDGTGHIRAIKESGFDIKGKTMVLLGAGGASTAIGAQGAIEGLKEIKLFNRRDEFFDKALAFAQRVNENTDCVVTDTDLADQQAFAEALASADILTNGTKVGMKPFENESLVNDISLLHPGLLVTECVYNPHMTKLLQQAQQAGCKTIDGYGMLLWQGAEQFTLWTGKDFPLEYVKQVMGFGA.

Positions 71 and 107 each coordinate substrate. Residues 132 to 135, 155 to 158, K205, 232 to 235, and G255 contribute to the NAD(+) site; these read AGGA, NRRD, and CVYN.

Belongs to the shikimate dehydrogenase family. In terms of assembly, homodimer.

It carries out the reaction L-quinate + NAD(+) = 3-dehydroquinate + NADH + H(+). It catalyses the reaction L-quinate + NADP(+) = 3-dehydroquinate + NADPH + H(+). The enzyme catalyses shikimate + NADP(+) = 3-dehydroshikimate + NADPH + H(+). The catalysed reaction is shikimate + NAD(+) = 3-dehydroshikimate + NADH + H(+). The protein operates within metabolic intermediate biosynthesis; chorismate biosynthesis; chorismate from D-erythrose 4-phosphate and phosphoenolpyruvate: step 4/7. Functionally, the actual biological function of YdiB remains unclear, nor is it known whether 3-dehydroshikimate or quinate represents the natural substrate. Catalyzes the reversible NAD-dependent reduction of both 3-dehydroshikimate (DHSA) and 3-dehydroquinate to yield shikimate (SA) and quinate, respectively. It can use both NAD or NADP for catalysis, however it has higher catalytic efficiency with NAD. This Shigella flexneri protein is Quinate/shikimate dehydrogenase.